A 455-amino-acid polypeptide reads, in one-letter code: Bifunctional protein GlmU (455 aa).

The tract at residues 1 to 227 (MDSLSIVILA…SWEAAGVNNK (227 aa)) is pyrophosphorylase. UDP-N-acetyl-alpha-D-glucosamine is bound by residues 9–12 (LAAG), Lys-23, Gln-74, 79–80 (GT), 101–103 (YGD), Gly-137, Glu-152, Asn-167, and Asn-225. Residue Asp-103 coordinates Mg(2+). Asn-225 provides a ligand contact to Mg(2+). Residues 228–248 (VQLAELERILQANQARALLEA) are linker. The segment at 249-455 (GVTLADPARI…GWKRPQKKSG (207 aa)) is N-acetyltransferase. UDP-N-acetyl-alpha-D-glucosamine is bound by residues Arg-331 and Lys-349. The active-site Proton acceptor is the His-361. Positions 364 and 375 each coordinate UDP-N-acetyl-alpha-D-glucosamine. Acetyl-CoA is bound by residues Ala-378, 384 to 385 (NY), Ser-403, Ala-421, and Arg-438.

The protein in the N-terminal section; belongs to the N-acetylglucosamine-1-phosphate uridyltransferase family. It in the C-terminal section; belongs to the transferase hexapeptide repeat family. Homotrimer. Mg(2+) is required as a cofactor.

It localises to the cytoplasm. It catalyses the reaction alpha-D-glucosamine 1-phosphate + acetyl-CoA = N-acetyl-alpha-D-glucosamine 1-phosphate + CoA + H(+). The enzyme catalyses N-acetyl-alpha-D-glucosamine 1-phosphate + UTP + H(+) = UDP-N-acetyl-alpha-D-glucosamine + diphosphate. Its pathway is nucleotide-sugar biosynthesis; UDP-N-acetyl-alpha-D-glucosamine biosynthesis; N-acetyl-alpha-D-glucosamine 1-phosphate from alpha-D-glucosamine 6-phosphate (route II): step 2/2. It functions in the pathway nucleotide-sugar biosynthesis; UDP-N-acetyl-alpha-D-glucosamine biosynthesis; UDP-N-acetyl-alpha-D-glucosamine from N-acetyl-alpha-D-glucosamine 1-phosphate: step 1/1. It participates in bacterial outer membrane biogenesis; LPS lipid A biosynthesis. Functionally, catalyzes the last two sequential reactions in the de novo biosynthetic pathway for UDP-N-acetylglucosamine (UDP-GlcNAc). The C-terminal domain catalyzes the transfer of acetyl group from acetyl coenzyme A to glucosamine-1-phosphate (GlcN-1-P) to produce N-acetylglucosamine-1-phosphate (GlcNAc-1-P), which is converted into UDP-GlcNAc by the transfer of uridine 5-monophosphate (from uridine 5-triphosphate), a reaction catalyzed by the N-terminal domain. This is Bifunctional protein GlmU from Chromobacterium violaceum (strain ATCC 12472 / DSM 30191 / JCM 1249 / CCUG 213 / NBRC 12614 / NCIMB 9131 / NCTC 9757 / MK).